The following is a 318-amino-acid chain: uncharacterized protein (318 aa).

A coiled-coil region spans residues 67–157 (LAFDELEKEK…SLKAIQTSQE (91 aa)). The tract at residues 172–318 (ESTNKVEKNA…KGFFARLFNL (147 aa)) is disordered. 2 stretches are compositionally biased toward basic and acidic residues: residues 175 to 193 (NKVE…KDSK) and 219 to 236 (KVDK…EKAS). Residues 237–248 (VEQSKNENAAET) are compositionally biased toward polar residues. Basic and acidic residues-rich tracts occupy residues 249-274 (SNKE…HAEA) and 300-310 (SEPKPQEEKKG).

This is an uncharacterized protein from Staphylococcus aureus (strain Mu50 / ATCC 700699).